The following is a 357-amino-acid chain: 3-isopropylmalate dehydrogenase, chloroplastic (357 aa).

The transit peptide at 1–29 directs the protein to the chloroplast; sequence MALQIAKRLLRCRADSVASSVRFFDRTFT. Residues R120, R130, R151, and D238 each contribute to the substrate site. Residues D238, D262, and D266 each coordinate Mg(2+). 296–308 contributes to the NAD(+) binding site; it reads GSAPDIAGKNLAN.

It belongs to the isocitrate and isopropylmalate dehydrogenases family. In terms of assembly, homodimer. Requires Mg(2+) as cofactor. It depends on Mn(2+) as a cofactor.

It is found in the plastid. The protein localises to the chloroplast. It carries out the reaction (2R,3S)-3-isopropylmalate + NAD(+) = 4-methyl-2-oxopentanoate + CO2 + NADH. Its pathway is amino-acid biosynthesis; L-leucine biosynthesis; L-leucine from 3-methyl-2-oxobutanoate: step 3/4. Catalyzes the oxidation of 3-carboxy-2-hydroxy-4-methylpentanoate (3-isopropylmalate) to 3-carboxy-4-methyl-2-oxopentanoate. The product decarboxylates to 4-methyl-2 oxopentanoate. The protein is 3-isopropylmalate dehydrogenase, chloroplastic of Solanum tuberosum (Potato).